Consider the following 305-residue polypeptide: Probable cell division protein WhiA (305 aa).

The H-T-H motif DNA-binding region spans 272 to 305; sequence SIQQLADSLTVPITKSGVNHRLRKINKIADELTD.

The protein belongs to the WhiA family.

In terms of biological role, involved in cell division and chromosome segregation. The sequence is that of Probable cell division protein WhiA from Streptococcus suis (strain 98HAH33).